The following is a 208-amino-acid chain: Orotidine 5'-phosphate decarboxylase (208 aa).

Residues Asp-7, Lys-29, 57-66 (DLKLADIPNT), Ser-109, 162-172 (PGIGAQGGKAK), Gly-185, and Arg-186 each bind substrate. The Proton donor role is filled by Lys-59.

Belongs to the OMP decarboxylase family. Type 1 subfamily. In terms of assembly, homodimer.

The enzyme catalyses orotidine 5'-phosphate + H(+) = UMP + CO2. It functions in the pathway pyrimidine metabolism; UMP biosynthesis via de novo pathway; UMP from orotate: step 2/2. Its function is as follows. Catalyzes the decarboxylation of orotidine 5'-monophosphate (OMP) to uridine 5'-monophosphate (UMP). The polypeptide is Orotidine 5'-phosphate decarboxylase (Pyrococcus abyssi (strain GE5 / Orsay)).